Reading from the N-terminus, the 349-residue chain is Protein pelota homolog (349 aa).

The protein belongs to the eukaryotic release factor 1 family. Pelota subfamily. As to quaternary structure, monomer. The cofactor is a divalent metal cation.

Its subcellular location is the cytoplasm. Functionally, may function in recognizing stalled ribosomes, interact with stem-loop structures in stalled mRNA molecules, and effect endonucleolytic cleavage of the mRNA. May play a role in the release non-functional ribosomes and degradation of damaged mRNAs. Has endoribonuclease activity. The polypeptide is Protein pelota homolog (Nitrosopumilus maritimus (strain SCM1)).